The chain runs to 358 residues: Probable cinnamyl alcohol dehydrogenase (358 aa).

A Zn(2+)-binding site is contributed by cysteine 48. Serine 50 is a binding site for NADP(+). Residues histidine 70, glutamate 71, cysteine 101, cysteine 104, cysteine 107, cysteine 115, and cysteine 164 each coordinate Zn(2+). Residues threonine 168, 189 to 194, 212 to 217, threonine 252, glycine 276, and 299 to 301 each bind NADP(+); these read GLGGVG, SSSDKK, and SFV.

Belongs to the zinc-containing alcohol dehydrogenase family. Homodimer. The cofactor is Zn(2+). In terms of tissue distribution, most actively expressed in stem, hypocotyl and root tissue.

It catalyses the reaction (E)-cinnamyl alcohol + NADP(+) = (E)-cinnamaldehyde + NADPH + H(+). The enzyme catalyses (E)-coniferol + NADP(+) = (E)-coniferaldehyde + NADPH + H(+). The catalysed reaction is (E)-sinapyl alcohol + NADP(+) = (E)-sinapaldehyde + NADPH + H(+). It carries out the reaction (E)-4-coumaroyl alcohol + NADP(+) = (E)-4-coumaraldehyde + NADPH + H(+). It catalyses the reaction (E)-caffeyl alcohol + NADP(+) = (E)-caffeyl aldehyde + NADPH + H(+). Its pathway is aromatic compound metabolism; phenylpropanoid biosynthesis. In terms of biological role, this protein catalyzes the final step in a branch of phenylpropanoid synthesis specific for production of lignin monomers. It acts on coniferyl-, sinapyl-, 4-coumaryl- and cinnamyl-alcohol. The polypeptide is Probable cinnamyl alcohol dehydrogenase (CAD2) (Medicago sativa (Alfalfa)).